We begin with the raw amino-acid sequence, 87 residues long: UPF0335 protein Meso_3367 (87 aa).

This sequence belongs to the UPF0335 family.

The sequence is that of UPF0335 protein Meso_3367 from Chelativorans sp. (strain BNC1).